The chain runs to 703 residues: DnaJ homolog subfamily C member 14 (703 aa).

Over residues 1–11 the composition is skewed to basic and acidic residues; sequence MAQKHPGERRL. A disordered region spans residues 1-229; that stretch reads MAQKHPGERR…GRHRLARKRS (229 aa). Residues 17–28 are compositionally biased toward low complexity; that stretch reads SGGTSLSTSGSS. The segment covering 75-84 has biased composition (pro residues); that stretch reads HGPPRGPGPP. Over residues 91–102 the composition is skewed to acidic residues; that stretch reads DESETGSEESGV. Residues 121 to 133 show a composition bias toward polar residues; that stretch reads SFLSIPSACNCQG. The span at 163–176 shows a compositional bias: acidic residues; that stretch reads GEDEELEEEYDDEE. The span at 193–202 shows a compositional bias: basic residues; the sequence is PLSRRQKHRF. Basic and acidic residues predominate over residues 203–218; sequence LIKEDVRDSGRREPKA. The span at 219-228 shows a compositional bias: basic residues; it reads PGRHRLARKR. The next 2 membrane-spanning stretches (helical) occupy residues 305–325 and 327–347; these read MMFQ…IRIL and VVGA…QLGW. The region spanning 444–508 is the J domain; sequence NPFHVLGVEA…ERRKEYEMKR (65 aa). Disordered stretches follow at residues 622 to 643 and 659 to 703; these read FGSR…PPAD and MSNG…PFQR. Polar residues predominate over residues 673–684; it reads GTTSTSRPNSSV. Over residues 691–703 the composition is skewed to basic residues; that stretch reads PKRRKKVRRPFQR.

In terms of assembly, interacts with the FxxxFxxxF motif of DRD1 via its C-terminal domain.

The protein resides in the endoplasmic reticulum membrane. Regulates the export of target proteins, such as DRD1, from the endoplasmic reticulum to the cell surface. In Mus musculus (Mouse), this protein is DnaJ homolog subfamily C member 14 (Dnajc14).